The following is a 211-amino-acid chain: ATP phosphoribosyltransferase (211 aa).

It belongs to the ATP phosphoribosyltransferase family. Short subfamily. Heteromultimer composed of HisG and HisZ subunits.

The protein resides in the cytoplasm. The catalysed reaction is 1-(5-phospho-beta-D-ribosyl)-ATP + diphosphate = 5-phospho-alpha-D-ribose 1-diphosphate + ATP. It participates in amino-acid biosynthesis; L-histidine biosynthesis; L-histidine from 5-phospho-alpha-D-ribose 1-diphosphate: step 1/9. Its function is as follows. Catalyzes the condensation of ATP and 5-phosphoribose 1-diphosphate to form N'-(5'-phosphoribosyl)-ATP (PR-ATP). Has a crucial role in the pathway because the rate of histidine biosynthesis seems to be controlled primarily by regulation of HisG enzymatic activity. The sequence is that of ATP phosphoribosyltransferase from Pseudomonas syringae pv. tomato (strain ATCC BAA-871 / DC3000).